The following is a 207-amino-acid chain: Large ribosomal subunit protein uL4 (207 aa).

The segment at 43–80 (RRRSGTAKSKGRSEVSGSTRKLYRQKGTGNARSGSVKS) is disordered. The span at 69 to 78 (GTGNARSGSV) shows a compositional bias: polar residues.

Belongs to the universal ribosomal protein uL4 family. As to quaternary structure, part of the 50S ribosomal subunit.

Functionally, one of the primary rRNA binding proteins, this protein initially binds near the 5'-end of the 23S rRNA. It is important during the early stages of 50S assembly. It makes multiple contacts with different domains of the 23S rRNA in the assembled 50S subunit and ribosome. In terms of biological role, forms part of the polypeptide exit tunnel. This Desulforapulum autotrophicum (strain ATCC 43914 / DSM 3382 / VKM B-1955 / HRM2) (Desulfobacterium autotrophicum) protein is Large ribosomal subunit protein uL4.